The following is a 228-amino-acid chain: uncharacterized protein (228 aa).

21–28 (GMIALGKT) contributes to the ATP binding site.

This is an uncharacterized protein from Mycoplasma genitalium (strain ATCC 33530 / DSM 19775 / NCTC 10195 / G37) (Mycoplasmoides genitalium).